Consider the following 229-residue polypeptide: 2-C-methyl-D-erythritol 4-phosphate cytidylyltransferase (229 aa).

It belongs to the IspD/TarI cytidylyltransferase family. IspD subfamily.

The enzyme catalyses 2-C-methyl-D-erythritol 4-phosphate + CTP + H(+) = 4-CDP-2-C-methyl-D-erythritol + diphosphate. It participates in isoprenoid biosynthesis; isopentenyl diphosphate biosynthesis via DXP pathway; isopentenyl diphosphate from 1-deoxy-D-xylulose 5-phosphate: step 2/6. Catalyzes the formation of 4-diphosphocytidyl-2-C-methyl-D-erythritol from CTP and 2-C-methyl-D-erythritol 4-phosphate (MEP). This is 2-C-methyl-D-erythritol 4-phosphate cytidylyltransferase from Clostridium botulinum (strain 657 / Type Ba4).